The chain runs to 309 residues: Porphobilinogen deaminase (309 aa).

S-(dipyrrolylmethanemethyl)cysteine is present on C242.

It belongs to the HMBS family. As to quaternary structure, monomer. It depends on dipyrromethane as a cofactor.

It catalyses the reaction 4 porphobilinogen + H2O = hydroxymethylbilane + 4 NH4(+). It functions in the pathway porphyrin-containing compound metabolism; protoporphyrin-IX biosynthesis; coproporphyrinogen-III from 5-aminolevulinate: step 2/4. Tetrapolymerization of the monopyrrole PBG into the hydroxymethylbilane pre-uroporphyrinogen in several discrete steps. The sequence is that of Porphobilinogen deaminase from Shewanella woodyi (strain ATCC 51908 / MS32).